Consider the following 131-residue polypeptide: MIFVDTSFWAALGNAGDARHGTAKRLWASKPPVVMTSNHVLGETWTLLNRRCGHRAAVAAAAIRLSTVVRVEHVTADLEEQAWEWLVRHDEREYSFVDATSFAVMRKKGIQNAYAFDGDFSAAGFVEVRPE.

Positions I2–F125 constitute a PINc domain. Residues D5 and D98 each contribute to the Mg(2+) site.

Belongs to the PINc/VapC protein family. Requires Mg(2+) as cofactor.

Toxic component of a type II toxin-antitoxin (TA) system. An endoribonuclease that cleaves 23S rRNA in the sarcin-ricin loop (SRL). The SRL sequence is highly conserved and is implicated in GTP hydrolysis by EF-Tu and EF-G. Acts on purified ribosomes but not on isolated RNA. Its toxic effect is neutralized by coexpression with cognate antitoxin VapB20. This chain is 23S rRNA-specific endonuclease VapC20 (vapC20), found in Mycobacterium tuberculosis (strain CDC 1551 / Oshkosh).